Reading from the N-terminus, the 402-residue chain is Dihydrolipoyllysine-residue acetyltransferase component of pyruvate dehydrogenase complex (402 aa).

The region spanning 1-69 is the Lipoyl-binding domain; that stretch reads MPDIGLEEVE…KTSSIIMIFK (69 aa). An N6-lipoyllysine modification is found at Lys-35. Residues 109-146 enclose the Peripheral subunit-binding (PSBD) domain; sequence HATPVVRRLARHLNVDLKNITPSGPKNRILKEDIELYI. His-375 is a catalytic residue.

The protein belongs to the 2-oxoacid dehydrogenase family. Forms a 24-polypeptide structural core with octahedral symmetry. (R)-lipoate serves as cofactor.

It carries out the reaction N(6)-[(R)-dihydrolipoyl]-L-lysyl-[protein] + acetyl-CoA = N(6)-[(R)-S(8)-acetyldihydrolipoyl]-L-lysyl-[protein] + CoA. Functionally, the pyruvate dehydrogenase complex catalyzes the overall conversion of pyruvate to acetyl-CoA and CO(2). It contains multiple copies of three enzymatic components: pyruvate dehydrogenase (E1), dihydrolipoamide acetyltransferase (E2) and lipoamide dehydrogenase (E3). This Buchnera aphidicola subsp. Schizaphis graminum (strain Sg) protein is Dihydrolipoyllysine-residue acetyltransferase component of pyruvate dehydrogenase complex (aceF).